We begin with the raw amino-acid sequence, 983 residues long: Importin beta-like protein kap113 (983 aa).

The Importin N-terminal domain occupies 24–96 (AEGHLNNWKK…RCNALLGSIK (73 aa)).

The protein belongs to the importin beta family.

The protein resides in the nucleus. Its function is as follows. Functions as a component of the nuclear pore complex (NPC). NPC components, collectively referred to as nucleoporins (NUPs), can play the role of both NPC structural components and of docking or interaction partners for transiently associated nuclear transport factors. Active directional transport is assured by both, a Phe-Gly (FG) repeat affinity gradient for these transport factors across the NPC and a transport cofactor concentration gradient across the nuclear envelope. Involved in the export of mRNA from the nucleus to the cytoplasm. May play a role in mitotic spindle formation and/or function. The polypeptide is Importin beta-like protein kap113 (kap113) (Schizosaccharomyces pombe (strain 972 / ATCC 24843) (Fission yeast)).